A 361-amino-acid polypeptide reads, in one-letter code: MLQWLAQLHDTFPAFNVFRYITFRTGGAIVTAVLFVFLFGPGIISTLRLKQGKGQPIRADGPQSHLLTKKGTPTMGGLMIFSGLIVATLLWANLSNLYVWVVLFVTTGFGLIGFYDDYLKVTRQSHAGFSGKARLAIEALIAGIAVVLMINAGRAGLSSSVAFPFFKDLLLDLGWFFVVFGAFVIVAAGNAVNLTDGLDGLAIVPVMIAAASFGMISYLSGNVVFADYLQIHYVAGVGELAVICGAIIGAGLGFLWFNAPPAQIFMGDTGSLALGGLLGSIAVATKHEIVLAVIGGLFVLEAVSVIVQVISFRLTGKRVFRMAPIHHHFEQLGWTESQVVIRFWIIAVVLALLGLATLKLR.

10 consecutive transmembrane segments (helical) span residues 27 to 47 (GAIV…ISTL), 72 to 92 (TPTM…LLWA), 94 to 114 (LSNL…LIGF), 133 to 153 (ARLA…INAG), 169 to 189 (LLLD…VAAG), 200 to 220 (GLAI…SYLS), 237 to 257 (VGEL…FLWF), 264 to 284 (IFMG…IAVA), 289 to 309 (IVLA…IVQV), and 338 to 358 (QVVI…LATL).

This sequence belongs to the glycosyltransferase 4 family. MraY subfamily. The cofactor is Mg(2+).

Its subcellular location is the cell inner membrane. It catalyses the reaction UDP-N-acetyl-alpha-D-muramoyl-L-alanyl-gamma-D-glutamyl-meso-2,6-diaminopimeloyl-D-alanyl-D-alanine + di-trans,octa-cis-undecaprenyl phosphate = di-trans,octa-cis-undecaprenyl diphospho-N-acetyl-alpha-D-muramoyl-L-alanyl-D-glutamyl-meso-2,6-diaminopimeloyl-D-alanyl-D-alanine + UMP. Its pathway is cell wall biogenesis; peptidoglycan biosynthesis. Catalyzes the initial step of the lipid cycle reactions in the biosynthesis of the cell wall peptidoglycan: transfers peptidoglycan precursor phospho-MurNAc-pentapeptide from UDP-MurNAc-pentapeptide onto the lipid carrier undecaprenyl phosphate, yielding undecaprenyl-pyrophosphoryl-MurNAc-pentapeptide, known as lipid I. The protein is Phospho-N-acetylmuramoyl-pentapeptide-transferase of Azorhizobium caulinodans (strain ATCC 43989 / DSM 5975 / JCM 20966 / LMG 6465 / NBRC 14845 / NCIMB 13405 / ORS 571).